The sequence spans 78 residues: uncharacterized protein (78 aa).

This is an uncharacterized protein from Amsacta (AmEPV).